We begin with the raw amino-acid sequence, 664 residues long: Bifunctional polymyxin resistance protein ArnA (664 aa).

The formyltransferase ArnAFT stretch occupies residues 1–308 (MSTKAVVFAY…EFGLVAGSQM (308 aa)). Residue His106 is the Proton donor; for formyltransferase activity of the active site. Residues Arg116 and 138 to 142 (VKRAD) each bind (6R)-10-formyltetrahydrofolate. A dehydrogenase ArnADH region spans residues 318 to 664 (RRTRVLILGV…EAMAEKADQC (347 aa)). NAD(+) contacts are provided by residues Asp351 and 372–373 (DI). Residues Ala397, Tyr402, and 436-437 (TS) each bind UDP-alpha-D-glucuronate. Glu438 functions as the Proton acceptor; for decarboxylase activity in the catalytic mechanism. UDP-alpha-D-glucuronate contacts are provided by residues Arg464, Asn495, 529–538 (RLVDGGAQKR), and Tyr616. Catalysis depends on Arg622, which acts as the Proton donor; for decarboxylase activity.

The protein in the N-terminal section; belongs to the Fmt family. UDP-L-Ara4N formyltransferase subfamily. It in the C-terminal section; belongs to the NAD(P)-dependent epimerase/dehydratase family. UDP-glucuronic acid decarboxylase subfamily. In terms of assembly, homohexamer, formed by a dimer of trimers.

It catalyses the reaction UDP-alpha-D-glucuronate + NAD(+) = UDP-beta-L-threo-pentopyranos-4-ulose + CO2 + NADH. The enzyme catalyses UDP-4-amino-4-deoxy-beta-L-arabinose + (6R)-10-formyltetrahydrofolate = UDP-4-deoxy-4-formamido-beta-L-arabinose + (6S)-5,6,7,8-tetrahydrofolate + H(+). It participates in nucleotide-sugar biosynthesis; UDP-4-deoxy-4-formamido-beta-L-arabinose biosynthesis; UDP-4-deoxy-4-formamido-beta-L-arabinose from UDP-alpha-D-glucuronate: step 1/3. Its pathway is nucleotide-sugar biosynthesis; UDP-4-deoxy-4-formamido-beta-L-arabinose biosynthesis; UDP-4-deoxy-4-formamido-beta-L-arabinose from UDP-alpha-D-glucuronate: step 3/3. It functions in the pathway bacterial outer membrane biogenesis; lipopolysaccharide biosynthesis. Functionally, bifunctional enzyme that catalyzes the oxidative decarboxylation of UDP-glucuronic acid (UDP-GlcUA) to UDP-4-keto-arabinose (UDP-Ara4O) and the addition of a formyl group to UDP-4-amino-4-deoxy-L-arabinose (UDP-L-Ara4N) to form UDP-L-4-formamido-arabinose (UDP-L-Ara4FN). The modified arabinose is attached to lipid A and is required for resistance to polymyxin and cationic antimicrobial peptides. The polypeptide is Bifunctional polymyxin resistance protein ArnA (Pseudomonas syringae pv. syringae (strain B728a)).